The chain runs to 276 residues: NH(3)-dependent NAD(+) synthetase (276 aa).

ATP is bound at residue 51–58 (GISGGVDS). D57 is a Mg(2+) binding site. R148 provides a ligand contact to deamido-NAD(+). Position 168 (T168) interacts with ATP. E173 contacts Mg(2+). Deamido-NAD(+)-binding residues include K181 and D188. Residues K197 and T219 each coordinate ATP. 268 to 269 (HK) provides a ligand contact to deamido-NAD(+).

Belongs to the NAD synthetase family. As to quaternary structure, homodimer.

The enzyme catalyses deamido-NAD(+) + NH4(+) + ATP = AMP + diphosphate + NAD(+) + H(+). It functions in the pathway cofactor biosynthesis; NAD(+) biosynthesis; NAD(+) from deamido-NAD(+) (ammonia route): step 1/1. Catalyzes the ATP-dependent amidation of deamido-NAD to form NAD. Uses ammonia as a nitrogen source. The protein is NH(3)-dependent NAD(+) synthetase of Streptomyces coelicolor (strain ATCC BAA-471 / A3(2) / M145).